The chain runs to 107 residues: Nucleoid-associated protein XF_1808 (107 aa).

This sequence belongs to the YbaB/EbfC family. Homodimer.

It localises to the cytoplasm. It is found in the nucleoid. In terms of biological role, binds to DNA and alters its conformation. May be involved in regulation of gene expression, nucleoid organization and DNA protection. The sequence is that of Nucleoid-associated protein XF_1808 from Xylella fastidiosa (strain 9a5c).